We begin with the raw amino-acid sequence, 173 residues long: Lens fiber membrane intrinsic protein (173 aa).

The Cytoplasmic portion of the chain corresponds to 1–3 (MYS). Residues 4–24 (FMGGGLFCAWVGTILLVVATA) traverse the membrane as a helical segment. Residues 25–66 (TDHWMQYRLSGSFAHQGLWRYCLGNKCFLQTESIAYWNATRA) lie on the Extracellular side of the membrane. Residues W43 and W61 are each glycosylated (C-linked (Man) tryptophan). N-linked (GlcNAc...) asparagine glycosylation occurs at N62. A helical transmembrane segment spans residues 67–87 (FMILSALCATSGIIMGVLAFA). Over 88 to 98 (QQSTFTRLSRP) the chain is Cytoplasmic. The helical transmembrane segment at 99 to 119 (FSAGIMFFASTLFVLLALAIY) threads the bilayer. At 120–140 (TGVTVSFLGRRFGDWRFSWSY) the chain is on the extracellular side. The helical transmembrane segment at 141-161 (ILGWVALLMTFFAGIFYMCAY) threads the bilayer. Residues 162 to 173 (RMHECRRLATPR) are Cytoplasmic-facing. A Phosphothreonine modification is found at T171.

This sequence belongs to the PMP-22/EMP/MP20 family. Seems to be associated with itself or another lens membrane component via disulfide bonds.

The protein localises to the membrane. In terms of biological role, present in the thicker 16-17 nm junctions of mammalian lens fiber cells, where it may contribute to cell junctional organization. Acts as a receptor for calmodulin. May play an important role in both lens development and cataractogenesis. The protein is Lens fiber membrane intrinsic protein (Lim2) of Mus musculus (Mouse).